Here is a 146-residue protein sequence, read N- to C-terminus: Large ribosomal subunit protein uL22 (146 aa).

The protein belongs to the universal ribosomal protein uL22 family. Part of the 50S ribosomal subunit.

Functionally, this protein binds specifically to 23S rRNA; its binding is stimulated by other ribosomal proteins, e.g. L4, L17, and L20. It is important during the early stages of 50S assembly. It makes multiple contacts with different domains of the 23S rRNA in the assembled 50S subunit and ribosome. Its function is as follows. The globular domain of the protein is located near the polypeptide exit tunnel on the outside of the subunit, while an extended beta-hairpin is found that lines the wall of the exit tunnel in the center of the 70S ribosome. The chain is Large ribosomal subunit protein uL22 from Nocardioides sp. (strain ATCC BAA-499 / JS614).